The primary structure comprises 190 residues: MNNNYPLGSIAQAVDVLKNEEVIAYPTEAVFGVGCDPDSETAVTRLLELKQRPVEKGLILIAANFEQLKPYIDDSMLTEQQRNTIFSAWPGPVTFVFPALPSTPSWLTGRFDSLAVRVTDHPLVVELCETFGKPLVSTSANLTGLPPCRTSQEVLAQFGDGFPVVVGETGGRLNPSEIRDALTGERFRQG.

Residues 7-190 (LGSIAQAVDV…ALTGERFRQG (184 aa)) enclose the YrdC-like domain.

It belongs to the SUA5 family. TsaC subfamily.

It localises to the cytoplasm. It catalyses the reaction L-threonine + hydrogencarbonate + ATP = L-threonylcarbamoyladenylate + diphosphate + H2O. Its function is as follows. Required for the formation of a threonylcarbamoyl group on adenosine at position 37 (t(6)A37) in tRNAs that read codons beginning with adenine. Catalyzes the conversion of L-threonine, HCO(3)(-)/CO(2) and ATP to give threonylcarbamoyl-AMP (TC-AMP) as the acyladenylate intermediate, with the release of diphosphate. The sequence is that of Threonylcarbamoyl-AMP synthase from Enterobacter sp. (strain 638).